The following is a 176-amino-acid chain: Large ribosomal subunit protein uL6 (176 aa).

The protein belongs to the universal ribosomal protein uL6 family. As to quaternary structure, part of the 50S ribosomal subunit.

Its function is as follows. This protein binds to the 23S rRNA, and is important in its secondary structure. It is located near the subunit interface in the base of the L7/L12 stalk, and near the tRNA binding site of the peptidyltransferase center. The sequence is that of Large ribosomal subunit protein uL6 from Shewanella sediminis (strain HAW-EB3).